A 108-amino-acid chain; its full sequence is Small ribosomal subunit protein uS17 (108 aa).

It belongs to the universal ribosomal protein uS17 family. In terms of assembly, part of the 30S ribosomal subunit.

In terms of biological role, one of the primary rRNA binding proteins, it binds specifically to the 5'-end of 16S ribosomal RNA. The protein is Small ribosomal subunit protein uS17 of Methanospirillum hungatei JF-1 (strain ATCC 27890 / DSM 864 / NBRC 100397 / JF-1).